The sequence spans 353 residues: L-tryptophan dehydrogenase (353 aa).

R44 contacts NAD(+). Catalysis depends on K80, which acts as the Proton donor/acceptor. NAD(+) contacts are provided by residues D114, T146, 176–181, K204, and 255–257; these read GLGNVG and AAN.

It belongs to the Glu/Leu/Phe/Val dehydrogenases family. In terms of assembly, homodimer.

It carries out the reaction L-tryptophan + NAD(+) + H2O = indole-3-pyruvate + NH4(+) + NADH + H(+). Its activity is regulated as follows. Highly susceptible to inhibition by indole-3-pyruvate. Activity is not affected by the presence of metal ions, EDTA, KCl or DMSO. In terms of biological role, catalyzes the reversible oxidative deamination of L-tryptophan to indole-3-pyruvate in the presence of NAD(+). Shows weak activity with L-phenylalanine, but cannot use other L-amino acids and D-Trp. Cannot use NADP(+) for oxidative deamination of L-Trp, and shows only weak activity with NADPH for reductive amination of indole-3-pyruvate. Involved in the biosynthesis of scytonemin, a cyanobacterial radiation-absorbing pigment. In Nostoc punctiforme, this protein is L-tryptophan dehydrogenase.